Consider the following 116-residue polypeptide: Large ribosomal subunit protein bL17 (116 aa).

Belongs to the bacterial ribosomal protein bL17 family. As to quaternary structure, part of the 50S ribosomal subunit. Contacts protein L32.

The protein is Large ribosomal subunit protein bL17 of Prochlorococcus marinus (strain MIT 9215).